The following is a 256-amino-acid chain: Pimeloyl-[acyl-carrier protein] methyl ester esterase (256 aa).

Residues 15-242 (HLVLLHGWGL…AAHAPFISHP (228 aa)) form the AB hydrolase-1 domain. Substrate contacts are provided by residues tryptophan 22, 82 to 83 (SL), and 143 to 147 (FLALQ). The active-site Nucleophile is serine 82. Catalysis depends on residues aspartate 207 and histidine 235. Substrate is bound at residue histidine 235.

It belongs to the AB hydrolase superfamily. Carboxylesterase BioH family. As to quaternary structure, monomer.

Its subcellular location is the cytoplasm. It catalyses the reaction 6-carboxyhexanoyl-[ACP] methyl ester + H2O = 6-carboxyhexanoyl-[ACP] + methanol + H(+). It functions in the pathway cofactor biosynthesis; biotin biosynthesis. Its function is as follows. The physiological role of BioH is to remove the methyl group introduced by BioC when the pimeloyl moiety is complete. It allows to synthesize pimeloyl-ACP via the fatty acid synthetic pathway through the hydrolysis of the ester bonds of pimeloyl-ACP esters. The sequence is that of Pimeloyl-[acyl-carrier protein] methyl ester esterase from Shigella dysenteriae serotype 1 (strain Sd197).